The following is a 235-amino-acid chain: Large ribosomal subunit protein uL1 (235 aa).

The protein belongs to the universal ribosomal protein uL1 family. In terms of assembly, part of the 50S ribosomal subunit.

Functionally, binds directly to 23S rRNA. The L1 stalk is quite mobile in the ribosome, and is involved in E site tRNA release. Its function is as follows. Protein L1 is also a translational repressor protein, it controls the translation of the L11 operon by binding to its mRNA. The sequence is that of Large ribosomal subunit protein uL1 from Methylobacterium sp. (strain 4-46).